The chain runs to 101 residues: MAKSSMKAREAKRAKLVAKYAEKRLALKAIISNPTTSDEDRWDAVLKLQGLPRDSSAARQRNRCSQTGRPHGFLRKFGLSRIKLREATMRGEVPGLRKASW.

Belongs to the universal ribosomal protein uS14 family. As to quaternary structure, part of the 30S ribosomal subunit. Contacts proteins S3 and S10.

In terms of biological role, binds 16S rRNA, required for the assembly of 30S particles and may also be responsible for determining the conformation of the 16S rRNA at the A site. This chain is Small ribosomal subunit protein uS14, found in Shewanella loihica (strain ATCC BAA-1088 / PV-4).